The primary structure comprises 320 residues: MPMYQVKPYHGGSAPLHVELPTCMYRLPNVHSKTTSPATDAGHVQETSEPSLQALESRQDDILKRLYELKAAVDGLSKMIHTPDADLDVTNILQADEPTTLATNTLDLNSVLGKDYGALKDIVINANPASPPLSLLVLHRLLCERYRVLSTVHTHSSVKNVPENLVKCFGEQARKQSRHEYQLGFTLIWKNVPKTQMKFSVQTMCPIEGEGNIARFLFSLFGQKHNAVTLTLIDSWVDIAMFQLREGSSKEKAAVFRSMNSALGRSPWLVGNELTVADVVLWSVLQQTGGSSGAAPTNVQRWLKSCENLAPFSTALQLLK.

Residue Ser-36 is modified to Phosphoserine. The segment at 82–162 (TPDADLDVTN…HTHSSVKNVP (81 aa)) is interaction with PRKN. The tract at residues 162 to 225 (PENLVKCFGE…FLFSLFGQKH (64 aa)) is interaction with TP53. One can recognise a GST C-terminal domain in the interval 220 to 317 (LFGQKHNAVT…NLAPFSTALQ (98 aa)).

In terms of assembly, part of the multisynthetase complex (MSC), a multisubunit complex that groups tRNA ligases for Arg (RARS1), Asp (DARS1), Gln (QARS1), Ile (IARS1), Leu (LARS1), Lys (KARS1), Met (MARS1) the bifunctional ligase for Glu and Pro (EPRS1) and the auxiliary subunits AIMP1/p43, AIMP2/p38 and EEF1E1/p18. Interacts (via N-terminus) with KARS1. Interacts with EPRS1. Forms a linear complex that contains MARS1, EEF1E1, EPRS1 and AIMP2 that is at the core of the multisubunit complex. Binds FUBP1 (via C-terminus). Interacts in both its unphosphorylated and phosphorylated forms with p53/TP53 (via N-terminus) in the nucleus following UV irradiation. Interacts (via N-terminus) with PRKN/parkin (via first RING-type domain). Interacts with TARS3. Post-translationally, phosphorylated on serine residues in response to UV irradiation. Ubiquitinated by PRKN, leading to its degradation by the proteasome.

It localises to the cytoplasm. The protein localises to the cytosol. The protein resides in the nucleus. In terms of biological role, required for assembly and stability of the aminoacyl-tRNA synthase complex. Mediates ubiquitination and degradation of FUBP1, a transcriptional activator of MYC, leading to MYC down-regulation which is required for aveolar type II cell differentiation. Blocks MDM2-mediated ubiquitination and degradation of p53/TP53. Functions as a proapoptotic factor. In Mus musculus (Mouse), this protein is Aminoacyl tRNA synthase complex-interacting multifunctional protein 2 (Aimp2).